We begin with the raw amino-acid sequence, 166 residues long: MPDNSFDIVSKIEMPEVHNAVQQAMKEVQQRFDLKDSHSNIELKEKDNKILLQSSDEYKLKNVIDILQSKLVKRNVPLKGLAYGEIIPSAGSTVKQEITLQQGIAIEKARDIVKKLKDSKLKVQASIQGDFVRVAGKDRDTLQSAIALLRGSDFGIDMQFTNYRTN.

This sequence belongs to the YajQ family.

Nucleotide-binding protein. This chain is Nucleotide-binding protein Acid_3194, found in Solibacter usitatus (strain Ellin6076).